Consider the following 331-residue polypeptide: Ornithine lipid hydroxylase OlsE (331 aa).

Transmembrane regions (helical) follow at residues 13–33 (VSSLLWPAILCAGLTGAYFAF), 37–57 (MHLLWFNVVYLSTVAIIALFE), 85–105 (GGVQIAAAIGTSFPMAVATVA), 120–140 (WPMAFQVVLGLVIAEFGLYMA), and 189–209 (LLGAPLPVFLWIGAVTAFIGL). In terms of domain architecture, Fatty acid hydroxylase spans 126 to 260 (VVLGLVIAEF…LVIWDQLLGT (135 aa)).

Belongs to the sterol desaturase family.

The protein resides in the cell inner membrane. It participates in lipid metabolism. Functionally, involved in the biosynthesis of ornithine lipids (OLs), which are phosphorus-free membrane lipids. Is responsible for the hydroxylation of OL within the ornithine moiety. This is Ornithine lipid hydroxylase OlsE from Rhizobium tropici.